Here is a 377-residue protein sequence, read N- to C-terminus: Guanine nucleotide exchange factor for Rab-3A (377 aa).

The interval 23–57 (WKNLGPSKGNRKSPGGLVEASASWEEAGGEEHPAA) is disordered. Residues 77 to 128 (SEFLKEELYKAQKELKLKDEECERLCKVRAQLEQELEELTASLFEEAHKMVR) adopt a coiled-coil conformation. The disordered stretch occupies residues 167–198 (PASPNRELHPQLLSPTKAGPRKGHSRQKSTSS). A phosphoserine mark is found at S169 and S180.

Belongs to the SEC2 family. In terms of assembly, interacts with RAB3A and IHPK1 through the coiled-coil domain. This interaction is competitive. IHPK1 kinase activity is not required for this interaction. As to expression, selectively localized to the brain (at protein level).

Guanine nucleotide exchange factor (GEF) which may activate RAB3A, a GTPase that regulates synaptic vesicle exocytosis. Promotes the exchange of GDP to GTP, converting inactive GDP-bound Rab proteins into their active GTP-bound form. May also activate RAB8A and RAB8B. The polypeptide is Guanine nucleotide exchange factor for Rab-3A (Rab3il1) (Rattus norvegicus (Rat)).